A 502-amino-acid polypeptide reads, in one-letter code: Rab11 family-interacting protein 4B (502 aa).

Disordered stretches follow at residues 1 to 49 (MSIQ…EEGI) and 71 to 98 (SALS…TTSS). Basic and acidic residues predominate over residues 15-29 (EEGRGVERDSDRDSA). Positions 71–80 (SALSSASLNE) are enriched in polar residues. Positions 81–93 (EQFEDYGEGEDGD) are enriched in acidic residues. Residues 228–482 (DVKTKLKQEN…EEINLRLRQY (255 aa)) are a coiled coil. The region spanning 439 to 501 (EAKNLFATQT…DHNPSILEIK (63 aa)) is the FIP-RBD domain.

In terms of assembly, homodimer. Forms a complex with Rab11 (rab11a or rab11b) and arf6.

It is found in the recycling endosome membrane. The protein localises to the cleavage furrow. The protein resides in the midbody. It localises to the cytoplasmic vesicle. In terms of biological role, acts as a regulator of endocytic traffic by participating in membrane delivery. Required for the abscission step in cytokinesis, possibly by acting as an 'address tag' delivering recycling endosome membranes to the cleavage furrow during late cytokinesis. The sequence is that of Rab11 family-interacting protein 4B (rab11fip4b) from Danio rerio (Zebrafish).